A 209-amino-acid polypeptide reads, in one-letter code: Ribosomal RNA large subunit methyltransferase E (209 aa).

The S-adenosyl-L-methionine site is built by Gly-63, Trp-65, Asp-83, Asp-99, and Asp-124. Residue Lys-164 is the Proton acceptor of the active site. The TRAM domain occupies 191–209 (EASRGRSREVYIVATGYKG).

It belongs to the class I-like SAM-binding methyltransferase superfamily. RNA methyltransferase RlmE family.

Its subcellular location is the cytoplasm. The enzyme catalyses uridine(2552) in 23S rRNA + S-adenosyl-L-methionine = 2'-O-methyluridine(2552) in 23S rRNA + S-adenosyl-L-homocysteine + H(+). Functionally, specifically methylates the uridine in position 2552 of 23S rRNA at the 2'-O position of the ribose in the fully assembled 50S ribosomal subunit. This Haemophilus influenzae (strain ATCC 51907 / DSM 11121 / KW20 / Rd) protein is Ribosomal RNA large subunit methyltransferase E.